Reading from the N-terminus, the 430-residue chain is MANVVVVGAQWGDEGKGKIVDWLSERADVIARFQGGHNAGHTLVIDGKVYKLSLLPSGIVRPGKLSVIGNGVVLDPWHLVQEIAKLRADGVEISPQSLMIAENAVLILPLHGELDRARESQNSVAKIGTTGRGIGPAYEDKVGRRAIRVADLADEATLALRVDRLMVHHDALRRGLGIEPVDREALLAQLREIAPQVLPYAKPVWKVMNEMRKAGKRILFEGAQGALLDIDFGTYPYVTSSNVIAGQAATGTGIGPGAIGFVLGIVKAYTTRVGEGPFPAELQDADGERLGERGREFGTVTGRKRRCGWFDAVLVRQTCATSGVSGIALTKLDVLDGFETLKICVGYELDGERLDHLPIAADQQARCTPIFEELEGWSESTAGARSWADLPGAAVKYVRRIEELIQCPVALLSTSPERDDTILVTDPFED.

GTP-binding positions include 12 to 18 (GDEGKGK) and 40 to 42 (GHT). Asp13 functions as the Proton acceptor in the catalytic mechanism. Residues Asp13 and Gly40 each coordinate Mg(2+). IMP-binding positions include 13–16 (DEGK), 38–41 (NAGH), Thr130, Arg144, Gln224, Thr239, and Arg303. Catalysis depends on His41, which acts as the Proton donor. 299 to 305 (TVTGRKR) is a binding site for substrate. Residues Arg305, 331 to 333 (KLD), and 413 to 415 (STS) each bind GTP.

It belongs to the adenylosuccinate synthetase family. Homodimer. It depends on Mg(2+) as a cofactor.

The protein resides in the cytoplasm. It carries out the reaction IMP + L-aspartate + GTP = N(6)-(1,2-dicarboxyethyl)-AMP + GDP + phosphate + 2 H(+). The protein operates within purine metabolism; AMP biosynthesis via de novo pathway; AMP from IMP: step 1/2. Plays an important role in the de novo pathway of purine nucleotide biosynthesis. Catalyzes the first committed step in the biosynthesis of AMP from IMP. This chain is Adenylosuccinate synthetase, found in Cereibacter sphaeroides (strain ATCC 17023 / DSM 158 / JCM 6121 / CCUG 31486 / LMG 2827 / NBRC 12203 / NCIMB 8253 / ATH 2.4.1.) (Rhodobacter sphaeroides).